The chain runs to 600 residues: Melanophilin (600 aa).

Residues 4 to 124 (KLDLSKLTDE…IGSLEWYYEH (121 aa)) enclose the RabBD domain. The FYVE-type zinc finger occupies 64–107 (CARCLQPYQLLVNSKRQCLECGLFTCKSCGRVHPEEQGWICDPC). Disordered stretches follow at residues 146–277 (QGGA…AELC), 390–465 (EELT…LSEL), 499–541 (TVKP…AKAM), and 553–600 (NSLK…AHQS). 2 stretches are compositionally biased toward basic and acidic residues: residues 232–243 (CSEKAAPHKAEG) and 409–420 (KDEKAEPNRDKS). Residues 373–496 (GVRTEADVEE…ESRIAALRAA (124 aa)) adopt a coiled-coil conformation. Positions 558 to 569 (QGKDDDSFDRKS) are enriched in basic and acidic residues.

In terms of assembly, binds RAB27A that has been activated by GTP-binding via its N-terminus. Binds MYO5A via its C-terminal coiled coil domain.

It localises to the cytoplasm. Rab effector protein involved in melanosome transport. Serves as link between melanosome-bound RAB27A and the motor protein MYO5A. The polypeptide is Melanophilin (MLPH) (Homo sapiens (Human)).